The following is a 132-amino-acid chain: Chaperone protein SycT (132 aa).

Binds to YopT.

Functions as a specific chaperone for YopT. This chain is Chaperone protein SycT (sycT), found in Yersinia pestis.